A 239-amino-acid chain; its full sequence is Small ribosomal subunit protein uS3 (239 aa).

A KH type-2 domain is found at 39-107 (VREFLRKKLA…ATSINIEEIR (69 aa)). A disordered region spans residues 215–239 (TSNTNELSDEKRNRRKPRNANRRKE). Over residues 227–239 (NRRKPRNANRRKE) the composition is skewed to basic residues.

Belongs to the universal ribosomal protein uS3 family. Part of the 30S ribosomal subunit. Forms a tight complex with proteins S10 and S14.

Functionally, binds the lower part of the 30S subunit head. Binds mRNA in the 70S ribosome, positioning it for translation. The chain is Small ribosomal subunit protein uS3 from Dichelobacter nodosus (strain VCS1703A).